The primary structure comprises 681 residues: Leucine-rich repeat, immunoglobulin-like domain and transmembrane domain-containing protein 3 (681 aa).

Residues 1 to 19 (MWLSACLCLVLSFLGGVNG) form the signal peptide. N-linked (GlcNAc...) asparagine glycosylation is present at asparagine 18. The Lumenal portion of the chain corresponds to 20–584 (TCPSQCSCEY…RVEGRGSQWS (565 aa)). 5 LRR repeats span residues 56-79 (PVDT…AFYY), 80-103 (LVEL…SFYN), 104-128 (LRQL…LLDM), 129-151 (PHLR…AVRY), and 152-175 (LRNL…FLDS). Residues 254-344 (PSVMMSATKI…GISEAVVTVT (91 aa)) form the Ig-like domain. Cysteines 275 and 328 form a disulfide. Asparagine 296 carries N-linked (GlcNAc...) asparagine glycosylation. Disordered regions lie at residues 350 to 391 (TTTL…GLTS) and 425 to 464 (TSVQ…KFPP). The segment covering 378 to 391 (TPPSKSWLSPGLTS) has biased composition (polar residues). Asparagine 485 and asparagine 506 each carry an N-linked (GlcNAc...) asparagine glycan. Residues 585-605 (LLLVVTSTACVIVVPLICFLL) traverse the membrane as a helical segment. Topologically, residues 606 to 681 (YKVCKLQCTS…SDGCRTEYYG (76 aa)) are cytoplasmic.

Detected in the outer plexiform layer (OPL) of the retina, where it localizes to rod and cone ON-bipolar cells (at protein level). Also detected in bipolar cell bodies in the inner retinal layer (INL) (at protein level).

It is found in the cell projection. The protein resides in the dendrite. The protein localises to the perikaryon. It localises to the endoplasmic reticulum membrane. Its function is as follows. Plays a role in the synapse formation and synaptic transmission between cone photoreceptor cells and retinal bipolar cells. Required for normal transmission of a light-evoked stimulus from the cone photoreceptor cells to the ON-bipolar cells and ON-ganglion cells in the inner retina. Required in retinal ON-bipolar cells for normal localization of the cation channel TRPM1 at dendrite tips. Seems to play a specific role in synaptic contacts made by ON-bipolar cells with cone photoreceptor pedicles. May also have a role in cone synapse formation. Might facilitate FGFR1 exit from the endoplasmic reticulum to the Golgi. Could be a regulator of the FGFRs. The chain is Leucine-rich repeat, immunoglobulin-like domain and transmembrane domain-containing protein 3 from Mus musculus (Mouse).